The chain runs to 231 residues: NADH-ubiquinone oxidoreductase chain 4 (231 aa).

The next 6 helical transmembrane spans lie at 1–21, 34–54, 61–80, 85–107, 128–148, and 169–189; these read PIAG…YGII, MFLP…LTCL, SLIA…AIII, GLAG…FCLA, ILPM…AIPP, and TIIL…HMFL.

It belongs to the complex I subunit 4 family.

The protein localises to the mitochondrion membrane. The catalysed reaction is a ubiquinone + NADH + 5 H(+)(in) = a ubiquinol + NAD(+) + 4 H(+)(out). In terms of biological role, core subunit of the mitochondrial membrane respiratory chain NADH dehydrogenase (Complex I) that is believed to belong to the minimal assembly required for catalysis. Complex I functions in the transfer of electrons from NADH to the respiratory chain. The immediate electron acceptor for the enzyme is believed to be ubiquinone. This is NADH-ubiquinone oxidoreductase chain 4 (MT-ND4) from Gloydius blomhoffii (Mamushi).